A 251-amino-acid polypeptide reads, in one-letter code: Probable transcriptional regulatory protein Mflv_3828 (251 aa).

Belongs to the TACO1 family.

It is found in the cytoplasm. This chain is Probable transcriptional regulatory protein Mflv_3828, found in Mycolicibacterium gilvum (strain PYR-GCK) (Mycobacterium gilvum (strain PYR-GCK)).